Consider the following 1955-residue polypeptide: Callose synthase 3 (1955 aa).

Residues 1 to 488 (MSATRGGPDQ…FWHVFRSFDR (488 aa)) are Cytoplasmic-facing. The helical transmembrane segment at 489 to 509 (MWSFYILCLQAMIIMAWDGGQ) threads the bilayer. The Extracellular portion of the chain corresponds to 510–521 (PSSVFGADVFKK). Residues 522-542 (VLSVFITAAIMKLGQAVLDVI) form a helical membrane-spanning segment. Over 543–558 (LNFKAHQSMTLHVKLR) the chain is Cytoplasmic. A helical membrane pass occupies residues 559 to 579 (YILKVFSAAAWVIILPVTYAY). Over 580–604 (SWKDPPAFARTIKSWFGSAMHSPSL) the chain is Extracellular. Residues 605 to 625 (FIIAVVSYLSPNMLAGVMFLF) traverse the membrane as a helical segment. Residues 626–660 (PLLRRFLERSNYRIVMLMMWWSQPRLYVGRGMHES) lie on the Cytoplasmic side of the membrane. The chain crosses the membrane as a helical span at residues 661-681 (AFSLFKYTMFWVLLIATKLAF). Over 682-717 (SYYIEIRPLVAPTQAIMKARVTNFQWHEFFPRAKNN) the chain is Extracellular. A helical membrane pass occupies residues 718–738 (IGVVIALWAPIILVYFMDSQI). At 739-1517 (WYAIFSTLFG…FDFFRMMSCY (779 aa)) the chain is on the cytoplasmic side. The helical transmembrane segment at 1518–1538 (FTTVGFYFSTLITVLTVYIFL) threads the bilayer. At 1539 to 1566 (YGRLYLVLSGLEQGLSTQKGIRDNTPLQ) the chain is on the extracellular side. The chain crosses the membrane as a helical span at residues 1567-1587 (IALASQSFVQIGFLMALPMLM). Over 1588 to 1597 (EIGLERGFRT) the chain is Cytoplasmic. A helical transmembrane segment spans residues 1598–1618 (ALSEFVLMQLQLAPVFFTFSL). The Extracellular portion of the chain corresponds to 1619–1661 (GTKTHYYGRTLLHGGAKYRSTGRGFVVFHAKFADNYRLYSRSH). Residues 1662 to 1682 (FVKGLEMMLLLVVYQIFGSAY) form a helical membrane-spanning segment. Residues 1683 to 1688 (RGVLAY) lie on the Cytoplasmic side of the membrane. Residues 1689-1709 (LLITISMWFMVGTWLFAPFLF) traverse the membrane as a helical segment. Over 1710-1761 (NPSGFEWQKIVDDWTDWNKWINNIGGIGVPAEKSWESWWEEEQEHLRYSGKR) the chain is Extracellular. A helical membrane pass occupies residues 1762-1782 (GIVVEILLALRFFIYQYGLVY). Over 1783–1792 (HLTITEKTKN) the chain is Cytoplasmic. A helical transmembrane segment spans residues 1793-1813 (FLVYGVSWLVIFLILFVMKTV). The Extracellular segment spans residues 1814–1833 (SVGRRRFSASFQLMFRLIKG). Residues 1834-1854 (LIFMTFIAIIVILITLAHMTI) form a helical membrane-spanning segment. At 1855–1856 (QD) the chain is on the cytoplasmic side. Residues 1857–1877 (IIVCILAFMPTGWGMLLIAQA) traverse the membrane as a helical segment. Topologically, residues 1878 to 1899 (CKPVVHRAGFWGSVRTLARGYE) are extracellular. The chain crosses the membrane as a helical span at residues 1900–1920 (IVMGLLLFTPVAFLAWFPFVS). Over 1921–1955 (EFQTRMLFNQAFSRGLQISRILGGHRKDRSSRNKE) the chain is Cytoplasmic.

Belongs to the glycosyltransferase 48 family.

The protein resides in the cell membrane. It catalyses the reaction [(1-&gt;3)-beta-D-glucosyl](n) + UDP-alpha-D-glucose = [(1-&gt;3)-beta-D-glucosyl](n+1) + UDP + H(+). Involved in callose synthesis at the forming cell plate during cytokinesis. During plant growth and development, callose is found as a transitory component of the cell plate in dividing cells, is a major component of pollen mother cell walls and pollen tubes, and is found as a structural component of plasmodesmatal canals. The chain is Callose synthase 3 (CALS3) from Arabidopsis thaliana (Mouse-ear cress).